The following is a 491-amino-acid chain: Probable glycine dehydrogenase (decarboxylating) subunit 2 (491 aa).

An N6-(pyridoxal phosphate)lysine modification is found at K273.

It belongs to the GcvP family. C-terminal subunit subfamily. In terms of assembly, the glycine cleavage system is composed of four proteins: P, T, L and H. In this organism, the P 'protein' is a heterodimer of two subunits. Requires pyridoxal 5'-phosphate as cofactor.

It catalyses the reaction N(6)-[(R)-lipoyl]-L-lysyl-[glycine-cleavage complex H protein] + glycine + H(+) = N(6)-[(R)-S(8)-aminomethyldihydrolipoyl]-L-lysyl-[glycine-cleavage complex H protein] + CO2. In terms of biological role, the glycine cleavage system catalyzes the degradation of glycine. The P protein binds the alpha-amino group of glycine through its pyridoxal phosphate cofactor; CO(2) is released and the remaining methylamine moiety is then transferred to the lipoamide cofactor of the H protein. This is Probable glycine dehydrogenase (decarboxylating) subunit 2 from Bacillus cytotoxicus (strain DSM 22905 / CIP 110041 / 391-98 / NVH 391-98).